The chain runs to 251 residues: MEPKIKIRGVNFFYHRHQVLKNINMDFPDRQITAIIGPSGCGKSTLLRALNRMNDLVSGARLEGEVLLDNENVYSPNLDVVNLRKRVGMVFQQPNPFPKSIFDNVAFGPRMLGITAQSRLNEIVEKSLHQAALWDEVKDNLHKSGMALSGGQQQRLCIARVLAVEPEVILMDEPCSALDPVSTMRIEELMQELKQNYTIAIVTHNMQQAARASDWTGFLLTGDLIEYGRTGEIFSRPKDKRTEDYITGRFG.

In terms of domain architecture, ABC transporter spans 5-246; the sequence is IKIRGVNFFY…PKDKRTEDYI (242 aa). Position 37-44 (37-44) interacts with ATP; sequence GPSGCGKS.

It belongs to the ABC transporter superfamily. Phosphate importer (TC 3.A.1.7) family. In terms of assembly, the complex is composed of two ATP-binding proteins (PstB), two transmembrane proteins (PstC and PstA) and a solute-binding protein (PstS).

The protein resides in the cell membrane. The enzyme catalyses phosphate(out) + ATP + H2O = ADP + 2 phosphate(in) + H(+). Its function is as follows. Part of the ABC transporter complex PstSACB involved in phosphate import. Responsible for energy coupling to the transport system. This chain is Phosphate import ATP-binding protein PstB, found in Dehalococcoides mccartyi (strain ATCC BAA-2266 / KCTC 15142 / 195) (Dehalococcoides ethenogenes (strain 195)).